The following is a 337-amino-acid chain: Anthranilate phosphoribosyltransferase (337 aa).

Residues Gly81, 84–85 (GD), Thr89, 91–94 (NIST), 109–117 (KHGNRALSS), and Thr121 contribute to the 5-phospho-alpha-D-ribose 1-diphosphate site. Gly81 lines the anthranilate pocket. Residue Ser93 participates in Mg(2+) binding. Residue Asn112 participates in anthranilate binding. Arg167 lines the anthranilate pocket. Positions 225 and 226 each coordinate Mg(2+).

Belongs to the anthranilate phosphoribosyltransferase family. As to quaternary structure, homodimer. The cofactor is Mg(2+).

The enzyme catalyses N-(5-phospho-beta-D-ribosyl)anthranilate + diphosphate = 5-phospho-alpha-D-ribose 1-diphosphate + anthranilate. It functions in the pathway amino-acid biosynthesis; L-tryptophan biosynthesis; L-tryptophan from chorismate: step 2/5. Its function is as follows. Catalyzes the transfer of the phosphoribosyl group of 5-phosphorylribose-1-pyrophosphate (PRPP) to anthranilate to yield N-(5'-phosphoribosyl)-anthranilate (PRA). This chain is Anthranilate phosphoribosyltransferase, found in Sinorhizobium medicae (strain WSM419) (Ensifer medicae).